The chain runs to 233 residues: Large ribosomal subunit protein uL2 (233 aa).

The interval 195 to 233 is disordered; that stretch reads PHGGGNHQHVGRPSTVGRNAPPGRKVGRLSPKRRRVNGR. Basic residues predominate over residues 219–233; the sequence is KVGRLSPKRRRVNGR.

It belongs to the universal ribosomal protein uL2 family. In terms of assembly, part of the 50S ribosomal subunit. Forms a bridge to the 30S subunit in the 70S ribosome.

Functionally, one of the primary rRNA binding proteins. Required for association of the 30S and 50S subunits to form the 70S ribosome, for tRNA binding and peptide bond formation. It has been suggested to have peptidyltransferase activity; this is somewhat controversial. Makes several contacts with the 16S rRNA in the 70S ribosome. This is Large ribosomal subunit protein uL2 from Thermoplasma acidophilum (strain ATCC 25905 / DSM 1728 / JCM 9062 / NBRC 15155 / AMRC-C165).